A 201-amino-acid chain; its full sequence is Probable GTP-binding protein EngB (201 aa).

Residues 22-197 form the EngB-type G domain; that stretch reads RLPEYAFIGR…LDYIDSINQE (176 aa). GTP is bound by residues 30–37, 57–61, 75–78, 142–145, and 173–178; these read GRSNVGKS, GKTQL, DLPG, TKAD, and VFITSS. Residues S37 and T59 each coordinate Mg(2+).

It belongs to the TRAFAC class TrmE-Era-EngA-EngB-Septin-like GTPase superfamily. EngB GTPase family. It depends on Mg(2+) as a cofactor.

Necessary for normal cell division and for the maintenance of normal septation. The chain is Probable GTP-binding protein EngB from Porphyromonas gingivalis (strain ATCC 33277 / DSM 20709 / CIP 103683 / JCM 12257 / NCTC 11834 / 2561).